We begin with the raw amino-acid sequence, 252 residues long: MLAKRVIPCLDVKEGRVVKGVNFIGLQDVGDPVEIAALYNDAGADEIVFLDITATHEGRKTIVDVVEKTASKVFIPLTVGGGISNVKDMYNLLRAGADKVSINSAAVRNPKLIGEGAEHFGSQCIVVAIDARKVAEDKWNVYVNGGRVDTGMDAIRWAKRVTELGAGEILLTSMDADGTKNGYDLRLTEEISKSVSVPVIASGGCGHADHIIEVFQKTAVDAALAASIFHYGEATIGDVKRKLRNANVEVRL.

Residues aspartate 11 and aspartate 130 contribute to the active site.

This sequence belongs to the HisA/HisF family. In terms of assembly, heterodimer of HisH and HisF.

It is found in the cytoplasm. It carries out the reaction 5-[(5-phospho-1-deoxy-D-ribulos-1-ylimino)methylamino]-1-(5-phospho-beta-D-ribosyl)imidazole-4-carboxamide + L-glutamine = D-erythro-1-(imidazol-4-yl)glycerol 3-phosphate + 5-amino-1-(5-phospho-beta-D-ribosyl)imidazole-4-carboxamide + L-glutamate + H(+). It participates in amino-acid biosynthesis; L-histidine biosynthesis; L-histidine from 5-phospho-alpha-D-ribose 1-diphosphate: step 5/9. In terms of biological role, IGPS catalyzes the conversion of PRFAR and glutamine to IGP, AICAR and glutamate. The HisF subunit catalyzes the cyclization activity that produces IGP and AICAR from PRFAR using the ammonia provided by the HisH subunit. The chain is Imidazole glycerol phosphate synthase subunit HisF from Bacillus cereus (strain ATCC 10987 / NRS 248).